Reading from the N-terminus, the 402-residue chain is Nicotinate phosphoribosyltransferase (402 aa).

Histidine 226 is subject to Phosphohistidine; by autocatalysis.

The protein belongs to the NAPRTase family. Transiently phosphorylated on a His residue during the reaction cycle. Phosphorylation strongly increases the affinity for substrates and increases the rate of nicotinate D-ribonucleotide production. Dephosphorylation regenerates the low-affinity form of the enzyme, leading to product release.

The enzyme catalyses nicotinate + 5-phospho-alpha-D-ribose 1-diphosphate + ATP + H2O = nicotinate beta-D-ribonucleotide + ADP + phosphate + diphosphate. It participates in cofactor biosynthesis; NAD(+) biosynthesis; nicotinate D-ribonucleotide from nicotinate: step 1/1. Functionally, catalyzes the synthesis of beta-nicotinate D-ribonucleotide from nicotinate and 5-phospho-D-ribose 1-phosphate at the expense of ATP. The chain is Nicotinate phosphoribosyltransferase from Chromobacterium violaceum (strain ATCC 12472 / DSM 30191 / JCM 1249 / CCUG 213 / NBRC 12614 / NCIMB 9131 / NCTC 9757 / MK).